The primary structure comprises 340 residues: Glyceraldehyde-3-phosphate dehydrogenase, cytosolic (340 aa).

Residues 16-17 (RI), aspartate 38, and arginine 85 each bind NAD(+). Residues 156 to 158 (SCT), threonine 187, 216 to 217 (TG), and arginine 239 each bind D-glyceraldehyde 3-phosphate. Cysteine 157 serves as the catalytic Nucleophile. Residue asparagine 321 participates in NAD(+) binding.

The protein belongs to the glyceraldehyde-3-phosphate dehydrogenase family. Homotetramer.

It localises to the cytoplasm. The enzyme catalyses D-glyceraldehyde 3-phosphate + phosphate + NAD(+) = (2R)-3-phospho-glyceroyl phosphate + NADH + H(+). It functions in the pathway carbohydrate degradation; glycolysis; pyruvate from D-glyceraldehyde 3-phosphate: step 1/5. Key enzyme in glycolysis that catalyzes the first step of the pathway by converting D-glyceraldehyde 3-phosphate (G3P) into 3-phospho-D-glyceroyl phosphate. Essential for the maintenance of cellular ATP levels and carbohydrate metabolism. The protein is Glyceraldehyde-3-phosphate dehydrogenase, cytosolic (GAPC) of Pinus sylvestris (Scotch pine).